The primary structure comprises 177 residues: Large ribosomal subunit protein uL6 (177 aa).

The protein belongs to the universal ribosomal protein uL6 family. As to quaternary structure, part of the 50S ribosomal subunit.

In terms of biological role, this protein binds to the 23S rRNA, and is important in its secondary structure. It is located near the subunit interface in the base of the L7/L12 stalk, and near the tRNA binding site of the peptidyltransferase center. In Afipia carboxidovorans (strain ATCC 49405 / DSM 1227 / KCTC 32145 / OM5) (Oligotropha carboxidovorans), this protein is Large ribosomal subunit protein uL6.